A 209-amino-acid chain; its full sequence is A-type ATP synthase subunit D (209 aa).

It belongs to the V-ATPase D subunit family. As to quaternary structure, has multiple subunits with at least A(3), B(3), C, D, E, F, H, I and proteolipid K(x).

The protein localises to the cell membrane. Functionally, component of the A-type ATP synthase that produces ATP from ADP in the presence of a proton gradient across the membrane. In Thermoplasma volcanium (strain ATCC 51530 / DSM 4299 / JCM 9571 / NBRC 15438 / GSS1), this protein is A-type ATP synthase subunit D.